A 452-amino-acid chain; its full sequence is Probable receptor-like protein kinase At5g20050 (452 aa).

The N-terminal stretch at 1-23 (MEDKKANIIATILILALVVVIIA) is a signal peptide. Topologically, residues 24–33 (ARVSLKLSKT) are extracellular. A helical membrane pass occupies residues 34-54 (FYLIAGVDISLILAVICFLII). Over 55 to 452 (RSRYNKERKL…SSIISPISPR (398 aa)) the chain is Cytoplasmic. A Protein kinase domain is found at 103–392 (DGFRSLIGKG…MVIEMLEGRV (290 aa)). Residues 109-117 (IGKGGSGSV) and Lys-131 contribute to the ATP site. Tyr-178 carries the phosphotyrosine modification. The active-site Proton acceptor is the Asp-236. Thr-270 and Thr-275 each carry phosphothreonine.

It belongs to the protein kinase superfamily. Ser/Thr protein kinase family.

It is found in the membrane. It carries out the reaction L-seryl-[protein] + ATP = O-phospho-L-seryl-[protein] + ADP + H(+). It catalyses the reaction L-threonyl-[protein] + ATP = O-phospho-L-threonyl-[protein] + ADP + H(+). In Arabidopsis thaliana (Mouse-ear cress), this protein is Probable receptor-like protein kinase At5g20050.